The following is a 127-amino-acid chain: Transcription initiation factor IIA subunit 2 (127 aa).

It belongs to the TFIIA subunit 2 family. In terms of assembly, TFIIA is a heterodimer composed of the large TOA1 and the small TOA2 subunits.

The protein resides in the nucleus. In terms of biological role, TFIIA is a component of the transcription machinery of RNA polymerase II and plays an important role in transcriptional activation. TFIIA in a complex with tbp mediates transcriptional activity. The chain is Transcription initiation factor IIA subunit 2 (TOA2) from Cryptococcus neoformans var. neoformans serotype D (strain B-3501A) (Filobasidiella neoformans).